Here is a 145-residue protein sequence, read N- to C-terminus: Small ribosomal subunit protein eS12A (145 aa).

This sequence belongs to the eukaryotic ribosomal protein eS12 family. Component of the small ribosomal subunit (SSU). Mature yeast ribosomes consist of a small (40S) and a large (60S) subunit. The 40S small subunit contains 1 molecule of ribosomal RNA (18S rRNA) and at least 33 different proteins. The large 60S subunit contains 3 rRNA molecules (25S, 5.8S and 5S rRNA) and at least 46 different proteins.

It localises to the cytoplasm. In terms of biological role, component of the ribosome, a large ribonucleoprotein complex responsible for the synthesis of proteins in the cell. The small ribosomal subunit (SSU) binds messenger RNAs (mRNAs) and translates the encoded message by selecting cognate aminoacyl-transfer RNA (tRNA) molecules. The large subunit (LSU) contains the ribosomal catalytic site termed the peptidyl transferase center (PTC), which catalyzes the formation of peptide bonds, thereby polymerizing the amino acids delivered by tRNAs into a polypeptide chain. The nascent polypeptides leave the ribosome through a tunnel in the LSU and interact with protein factors that function in enzymatic processing, targeting, and the membrane insertion of nascent chains at the exit of the ribosomal tunnel. This Schizosaccharomyces pombe (strain 972 / ATCC 24843) (Fission yeast) protein is Small ribosomal subunit protein eS12A (rps1201).